Here is a 482-residue protein sequence, read N- to C-terminus: Nucleoside triphosphate pyrophosphatase/Nudix hydrolase fusion protein (482 aa).

Positions Met1 to Leu299 are maf-like. Asp167 acts as the Proton acceptor in catalysis. In terms of domain architecture, Nudix hydrolase spans Gly338–Leu475.

In the N-terminal section; belongs to the Maf family. Requires a divalent metal cation as cofactor.

The protein localises to the cytoplasm. The catalysed reaction is a ribonucleoside 5'-triphosphate + H2O = a ribonucleoside 5'-phosphate + diphosphate + H(+). It carries out the reaction a 2'-deoxyribonucleoside 5'-triphosphate + H2O = a 2'-deoxyribonucleoside 5'-phosphate + diphosphate + H(+). Nucleoside triphosphate pyrophosphatase. May have a dual role in cell division arrest and in preventing the incorporation of modified nucleotides into cellular nucleic acids. The protein is Nucleoside triphosphate pyrophosphatase/Nudix hydrolase fusion protein of Bifidobacterium longum (strain NCC 2705).